A 441-amino-acid polypeptide reads, in one-letter code: Protein translocase subunit SecY (441 aa).

A run of 10 helical transmembrane segments spans residues 24-44, 77-97, 123-143, 152-172, 181-201, 215-235, 272-292, 313-333, 373-393, and 397-417; these read LFVLGALIVYRIGSFIPVPGI, ILALGIMPYISASIVIQLLAT, ATVVFATIQAVAISTGLPNML, FSFYFTSVVSLVTGTMFLMWL, IGNGISILVFGGIVAGLPSAI, PLVLLLIAAIVFAVTYFVVFV, VMPAIFASSIILFPATLTQWF, PLYLLVYAVAIIFFSFFYTAM, LIGGLYVTFVCLVPYIMTSAW, and FYFGGTSLLIVVVVIMDFIVQ.

The protein belongs to the SecY/SEC61-alpha family. In terms of assembly, component of the Sec protein translocase complex. Heterotrimer consisting of SecY, SecE and SecG subunits. The heterotrimers can form oligomers, although 1 heterotrimer is thought to be able to translocate proteins. Interacts with the ribosome. Interacts with SecDF, and other proteins may be involved. Interacts with SecA.

It is found in the cell inner membrane. Its function is as follows. The central subunit of the protein translocation channel SecYEG. Consists of two halves formed by TMs 1-5 and 6-10. These two domains form a lateral gate at the front which open onto the bilayer between TMs 2 and 7, and are clamped together by SecE at the back. The channel is closed by both a pore ring composed of hydrophobic SecY resides and a short helix (helix 2A) on the extracellular side of the membrane which forms a plug. The plug probably moves laterally to allow the channel to open. The ring and the pore may move independently. The polypeptide is Protein translocase subunit SecY (Haemophilus influenzae (strain ATCC 51907 / DSM 11121 / KW20 / Rd)).